The primary structure comprises 210 residues: uncharacterized protein (210 aa).

One can recognise a Fe2OG dioxygenase domain in the interval 90-193 (KPDQIIVNEY…RISITFRNVI (104 aa)).

This is an uncharacterized protein from Acanthamoeba polyphaga (Amoeba).